A 203-amino-acid chain; its full sequence is UPF0637 protein SSP1683 (203 aa).

Belongs to the UPF0637 family.

In Staphylococcus saprophyticus subsp. saprophyticus (strain ATCC 15305 / DSM 20229 / NCIMB 8711 / NCTC 7292 / S-41), this protein is UPF0637 protein SSP1683.